A 354-amino-acid polypeptide reads, in one-letter code: Methylthioribose-1-phosphate isomerase (354 aa).

The Proton donor role is filled by D246.

It belongs to the eIF-2B alpha/beta/delta subunits family. MtnA subfamily.

It localises to the cytoplasm. The protein localises to the nucleus. It catalyses the reaction 5-(methylsulfanyl)-alpha-D-ribose 1-phosphate = 5-(methylsulfanyl)-D-ribulose 1-phosphate. Its pathway is amino-acid biosynthesis; L-methionine biosynthesis via salvage pathway; L-methionine from S-methyl-5-thio-alpha-D-ribose 1-phosphate: step 1/6. Its function is as follows. Catalyzes the interconversion of methylthioribose-1-phosphate (MTR-1-P) into methylthioribulose-1-phosphate (MTRu-1-P). The polypeptide is Methylthioribose-1-phosphate isomerase (mri1) (Xenopus tropicalis (Western clawed frog)).